We begin with the raw amino-acid sequence, 346 residues long: Zinc transporter YKE4 (346 aa).

Over 1-2 (MK) the chain is Extracellular. A helical transmembrane segment spans residues 3 to 23 (ASHICSYLLSIAPLVVSHGVH). The Cytoplasmic portion of the chain corresponds to 24 to 69 (HNRDHGHEANHESKQSFLILKQESIFYSLVCFLQNHLFVLGPRYNA). Residues 70–90 (IVAILIIQLMPCLFVLFVPGL) form a helical membrane-spanning segment. The Extracellular segment spans residues 91–99 (RKNDRASLT). Residues 100-120 (LSLLVSFSLGTLLGDILLHVI) form a helical membrane-spanning segment. Topologically, residues 121–126 (PESLSG) are cytoplasmic. Residues 127-147 (VTDVTMVGGAIFLGFISFLTL) form a helical membrane-spanning segment. Residues 148 to 202 (DKTMRILSGTSNDDGSIHSHSHSHTPQQTAEKKAGFNMSAYLNVISGIAHHITDG) lie on the Extracellular side of the membrane. The N-linked (GlcNAc...) asparagine glycan is linked to Asn184. Residues 203–223 (IALATSFYSSTQVGIMTSIAV) form a helical membrane-spanning segment. At 224 to 252 (TFHEIPHELGDFAILLSSGFTFPQAIRAQ) the chain is on the cytoplasmic side. The chain crosses the membrane as a helical span at residues 253 to 273 (AVTAFGAVVGTSIGCWMNEIG). 2 N-linked (GlcNAc...) asparagine glycosylation sites follow: Asn274 and Asn285. Residues 274–290 (NNSHKATSSSANASELM) lie on the Extracellular side of the membrane. Residues 291–311 (LPFTAGGLIYIATTSVVPQIL) traverse the membrane as a helical segment. At 312-322 (HSSAPDSKLRE) the chain is on the cytoplasmic side. The helical transmembrane segment at 323–343 (FKKWALQLVFIFVGFAVMALM) threads the bilayer. Residues 344–346 (DEH) lie on the Extracellular side of the membrane.

It belongs to the ZIP transporter (TC 2.A.5) family. KE4/Catsup subfamily.

The protein localises to the endoplasmic reticulum membrane. Functionally, zinc transporter whose role depends on the zinc status of the cells. It helps to balance zinc levels between the cytosol and the secretory pathway. It transports zinc into the secretory pathway in a zinc-adequate environment and in a high zinc medium. In high zinc medium, transport of zinc into the secretory pathway is a way to eliminate zinc from the cytosol. Under low cytosolic zinc conditions, it removes zinc from the secretory pathway and acts as a zinc importer that helps to alleviate ER stress. This chain is Zinc transporter YKE4 (YKE4), found in Saccharomyces cerevisiae (strain ATCC 204508 / S288c) (Baker's yeast).